The chain runs to 130 residues: Small ribosomal subunit protein uS8 (130 aa).

The protein belongs to the universal ribosomal protein uS8 family. Part of the 30S ribosomal subunit.

Its function is as follows. One of the primary rRNA binding proteins, it binds directly to 16S rRNA central domain where it helps coordinate assembly of the platform of the 30S subunit. The chain is Small ribosomal subunit protein uS8 from Natronomonas pharaonis (strain ATCC 35678 / DSM 2160 / CIP 103997 / JCM 8858 / NBRC 14720 / NCIMB 2260 / Gabara) (Halobacterium pharaonis).